A 1122-amino-acid chain; its full sequence is Transcription-repair-coupling factor (1122 aa).

The Helicase ATP-binding domain occupies 593–758 (DLRNGMLMDR…MTGLKELSII (166 aa)). 606 to 613 (GDVGFGKT) serves as a coordination point for ATP. The short motif at 711–714 (DEEQ) is the DEEQ box element. One can recognise a Helicase C-terminal domain in the interval 779–933 (IIRDALLREH…GFTIASRDMD (155 aa)).

The protein in the N-terminal section; belongs to the UvrB family. In the C-terminal section; belongs to the helicase family. RecG subfamily.

The protein resides in the cytoplasm. Its function is as follows. Couples transcription and DNA repair by recognizing RNA polymerase (RNAP) stalled at DNA lesions. Mediates ATP-dependent release of RNAP and its truncated transcript from the DNA, and recruitment of nucleotide excision repair machinery to the damaged site. The protein is Transcription-repair-coupling factor of Rickettsia conorii (strain ATCC VR-613 / Malish 7).